We begin with the raw amino-acid sequence, 120 residues long: NAD(P)H-quinone oxidoreductase subunit 3 (120 aa).

The next 3 membrane-spanning stretches (helical) occupy residues 6 to 26 (GYDA…LALV), 64 to 84 (MFAL…PWAV), and 89 to 109 (LGLL…VALA).

This sequence belongs to the complex I subunit 3 family. In terms of assembly, NDH-1 can be composed of about 15 different subunits; different subcomplexes with different compositions have been identified which probably have different functions.

The protein resides in the cellular thylakoid membrane. It catalyses the reaction a plastoquinone + NADH + (n+1) H(+)(in) = a plastoquinol + NAD(+) + n H(+)(out). It carries out the reaction a plastoquinone + NADPH + (n+1) H(+)(in) = a plastoquinol + NADP(+) + n H(+)(out). Functionally, NDH-1 shuttles electrons from an unknown electron donor, via FMN and iron-sulfur (Fe-S) centers, to quinones in the respiratory and/or the photosynthetic chain. The immediate electron acceptor for the enzyme in this species is believed to be plastoquinone. Couples the redox reaction to proton translocation, and thus conserves the redox energy in a proton gradient. Cyanobacterial NDH-1 also plays a role in inorganic carbon-concentration. This chain is NAD(P)H-quinone oxidoreductase subunit 3, found in Synechococcus sp. (strain WH7803).